We begin with the raw amino-acid sequence, 473 residues long: Rop guanine nucleotide exchange factor 3 (473 aa).

The segment at 1-28 (MENLSNPDENDDHQSPRSIDQNDQSAVE) is disordered. The span at 16–28 (PRSIDQNDQSAVE) shows a compositional bias: polar residues. In terms of domain architecture, PRONE spans 95-473 (LVVQEISEPE…YVDKTMRGSE (379 aa)).

Its function is as follows. Guanine-nucleotide exchange factor (GEF) that acts as an activator of Rop (Rho of plants) GTPases by promoting the exchange of GDP for GTP. This Arabidopsis thaliana (Mouse-ear cress) protein is Rop guanine nucleotide exchange factor 3 (ROPGEF3).